A 322-amino-acid chain; its full sequence is Formimidoylglutamase (322 aa).

The Mn(2+) site is built by H127, D163, H165, D167, D254, and D256.

Belongs to the arginase family. Mn(2+) serves as cofactor.

It catalyses the reaction N-formimidoyl-L-glutamate + H2O = formamide + L-glutamate. It functions in the pathway amino-acid degradation; L-histidine degradation into L-glutamate; L-glutamate from N-formimidoyl-L-glutamate (hydrolase route): step 1/1. In terms of biological role, catalyzes the conversion of N-formimidoyl-L-glutamate to L-glutamate and formamide. The polypeptide is Formimidoylglutamase (Paraburkholderia xenovorans (strain LB400)).